Reading from the N-terminus, the 649-residue chain is Microtubule-associated protein VP6 (649 aa).

It localises to the virion. The protein localises to the host cytoplasm. The protein resides in the host cytoskeleton. Functionally, minor inner capsid component. Displays NTPase and RNA 5'-triphosphatase (RTPase) activities. May function as a cofactor of polymerase VP2. Associates with microtubules and plays a role in the formation, structural organization and morphology of viral inclusions, where the assembly of cores and the replication of viral RNA occur. In Cryphonectria parasitica (Chestnut blight fungus), this protein is Microtubule-associated protein VP6 (S6).